We begin with the raw amino-acid sequence, 274 residues long: Glutamate racemase (274 aa).

Substrate is bound by residues 9–10 and 41–42; these read DS and YG. The Proton donor/acceptor role is filled by cysteine 73. 74-75 serves as a coordination point for substrate; it reads NT. Cysteine 183 serves as the catalytic Proton donor/acceptor. Substrate is bound at residue 184–185; it reads TH.

The protein belongs to the aspartate/glutamate racemases family.

The enzyme catalyses L-glutamate = D-glutamate. It participates in cell wall biogenesis; peptidoglycan biosynthesis. In terms of biological role, provides the (R)-glutamate required for cell wall biosynthesis. The sequence is that of Glutamate racemase from Shewanella baltica (strain OS223).